A 139-amino-acid chain; its full sequence is Transthyretin-like protein 5 (139 aa).

Residues Met1–Ala15 form the signal peptide.

The protein belongs to the nematode transthyretin-like family.

It is found in the secreted. The protein is Transthyretin-like protein 5 (ttr-5) of Caenorhabditis elegans.